The sequence spans 187 residues: Transmembrane protein 212 (187 aa).

5 consecutive transmembrane segments (helical) span residues 11–31, 42–62, 76–96, 106–126, and 148–168; these read TLVTLGGLSIFSGAIAFFPVF, VWIACPIWNGALAVTAGSLVL, AVFTFVILSILGCPLHFTVAL, FYSFSGVAGTNYLGYVVTFPF, and LQVLDLCLSLILFCVSLAVFI.

Its subcellular location is the membrane. This is Transmembrane protein 212 (Tmem212) from Mus musculus (Mouse).